The following is a 225-amino-acid chain: UPF0758 protein BPP1850 (225 aa).

Positions 103–225 (ALANPDLVRR…TVSMAAQGHL (123 aa)) constitute an MPN domain. His174, His176, and Asp187 together coordinate Zn(2+). Residues 174 to 187 (HNHPGGTAAASAAD) carry the JAMM motif motif.

Belongs to the UPF0758 family.

The sequence is that of UPF0758 protein BPP1850 from Bordetella parapertussis (strain 12822 / ATCC BAA-587 / NCTC 13253).